The following is a 128-amino-acid chain: Large ribosomal subunit protein uL22 (128 aa).

The protein belongs to the universal ribosomal protein uL22 family. In terms of assembly, part of the 50S ribosomal subunit.

In terms of biological role, this protein binds specifically to 23S rRNA; its binding is stimulated by other ribosomal proteins, e.g. L4, L17, and L20. It is important during the early stages of 50S assembly. It makes multiple contacts with different domains of the 23S rRNA in the assembled 50S subunit and ribosome. Functionally, the globular domain of the protein is located near the polypeptide exit tunnel on the outside of the subunit, while an extended beta-hairpin is found that lines the wall of the exit tunnel in the center of the 70S ribosome. This Prochlorococcus marinus (strain MIT 9301) protein is Large ribosomal subunit protein uL22.